The primary structure comprises 102 residues: Small ribosomal subunit protein uS10 (102 aa).

Belongs to the universal ribosomal protein uS10 family. Part of the 30S ribosomal subunit.

Functionally, involved in the binding of tRNA to the ribosomes. This Mesorhizobium japonicum (strain LMG 29417 / CECT 9101 / MAFF 303099) (Mesorhizobium loti (strain MAFF 303099)) protein is Small ribosomal subunit protein uS10.